The primary structure comprises 308 residues: Acetyl-coenzyme A carboxylase carboxyl transferase subunit beta (308 aa).

Positions 25-294 (VWTKCTSCEQ…PLVVSVNDSP (270 aa)) constitute a CoA carboxyltransferase N-terminal domain. Residues C29, C32, C48, and C51 each coordinate Zn(2+). A C4-type zinc finger spans residues 29-51 (CTSCEQVLYHAELERNLEVCPKC).

Belongs to the AccD/PCCB family. In terms of assembly, acetyl-CoA carboxylase is a heterohexamer composed of biotin carboxyl carrier protein (AccB), biotin carboxylase (AccC) and two subunits each of ACCase subunit alpha (AccA) and ACCase subunit beta (AccD). Zn(2+) is required as a cofactor.

The protein resides in the cytoplasm. The catalysed reaction is N(6)-carboxybiotinyl-L-lysyl-[protein] + acetyl-CoA = N(6)-biotinyl-L-lysyl-[protein] + malonyl-CoA. The protein operates within lipid metabolism; malonyl-CoA biosynthesis; malonyl-CoA from acetyl-CoA: step 1/1. Its function is as follows. Component of the acetyl coenzyme A carboxylase (ACC) complex. Biotin carboxylase (BC) catalyzes the carboxylation of biotin on its carrier protein (BCCP) and then the CO(2) group is transferred by the transcarboxylase to acetyl-CoA to form malonyl-CoA. The sequence is that of Acetyl-coenzyme A carboxylase carboxyl transferase subunit beta from Vibrio vulnificus (strain CMCP6).